We begin with the raw amino-acid sequence, 382 residues long: Lipid-A-disaccharide synthase (382 aa).

This sequence belongs to the LpxB family.

The enzyme catalyses 2-N,3-O-bis[(3R)-3-hydroxytetradecanoyl]-alpha-D-glucosaminyl 1-phosphate + UDP-2-N,3-O-bis[(3R)-3-hydroxytetradecanoyl]-alpha-D-glucosamine = lipid A disaccharide (E. coli) + UDP + H(+). It catalyses the reaction a lipid X + a UDP-2-N,3-O-bis[(3R)-3-hydroxyacyl]-alpha-D-glucosamine = a lipid A disaccharide + UDP + H(+). The protein operates within glycolipid biosynthesis; lipid IV(A) biosynthesis; lipid IV(A) from (3R)-3-hydroxytetradecanoyl-[acyl-carrier-protein] and UDP-N-acetyl-alpha-D-glucosamine: step 5/6. In terms of biological role, condensation of UDP-2,3-diacylglucosamine and 2,3-diacylglucosamine-1-phosphate to form lipid A disaccharide, a precursor of lipid A, a phosphorylated glycolipid that anchors the lipopolysaccharide to the outer membrane of the cell. This Escherichia coli O7:K1 (strain IAI39 / ExPEC) protein is Lipid-A-disaccharide synthase.